We begin with the raw amino-acid sequence, 326 residues long: Protein GVP36 (326 aa).

N-acetylserine is present on Ser-2. Ser-2 carries the phosphoserine modification. Glycyl lysine isopeptide (Lys-Gly) (interchain with G-Cter in ubiquitin) cross-links involve residues Lys-13, Lys-305, and Lys-313. The tract at residues 299-326 is disordered; sequence AEEPEAKPEVAEEEKPQTAISMNDEDDA. A compositionally biased stretch (basic and acidic residues) spans 302 to 314; the sequence is PEAKPEVAEEEKP. Ser-319 carries the phosphoserine modification.

The protein resides in the golgi apparatus membrane. This chain is Protein GVP36 (GVP36), found in Saccharomyces cerevisiae (strain ATCC 204508 / S288c) (Baker's yeast).